A 201-amino-acid chain; its full sequence is Recombination protein RecR (201 aa).

The C4-type zinc-finger motif lies at 60-75 (CSVCGNVDTSDPCTIC). The Toprim domain occupies 83–178 (ATLIVVEDVS…RVTKLAHGVP (96 aa)).

The protein belongs to the RecR family.

In terms of biological role, may play a role in DNA repair. It seems to be involved in an RecBC-independent recombinational process of DNA repair. It may act with RecF and RecO. The chain is Recombination protein RecR from Chelativorans sp. (strain BNC1).